Here is a 496-residue protein sequence, read N- to C-terminus: Beta-N-acetylhexosaminidase (496 aa).

The active-site Proton donor is Glu-298.

This sequence belongs to the glycosyl hydrolase 20 family.

The catalysed reaction is Hydrolysis of terminal non-reducing N-acetyl-D-hexosamine residues in N-acetyl-beta-D-hexosaminides.. It participates in glycan degradation; chitin degradation. Its function is as follows. Catalyzes the cleavage of beta-N-acetylglucosaminides and beta-N-acetylgalactosaminides. Also catalyzes the hydrolysis of N-acetylchitooligomers. May be involved in chitin degradation. It is not able to cleave beta-glucosides. This Cellulomonas fimi protein is Beta-N-acetylhexosaminidase (hex20).